A 337-amino-acid polypeptide reads, in one-letter code: Palmitoyltransferase ZDHHC15 (337 aa).

Over M1–L20 the chain is Cytoplasmic. The chain crosses the membrane as a helical span at residues S21–F41. At E42–I56 the chain is on the lumenal side. The chain crosses the membrane as a helical span at residues Y57 to F77. Topologically, residues T78–K172 are cytoplasmic. In terms of domain architecture, DHHC spans R129–A179. Positions 131, 134, 144, 145, 148, 151, and 158 each coordinate Zn(2+). Residue C159 is the S-palmitoyl cysteine intermediate of the active site. A Zn(2+)-binding site is contributed by C165. The chain crosses the membrane as a helical span at residues F173–F193. Residues S194–K210 are Lumenal-facing. A helical membrane pass occupies residues F211 to H234. Residues C235 to T337 are Cytoplasmic-facing. A disordered region spans residues H293 to T337. Residues E312–D323 show a composition bias toward acidic residues.

It belongs to the DHHC palmitoyltransferase family. Post-translationally, autopalmitoylated (in vitro). In brain, expressed in both excitatory and inhibitory neurons but not expressed by glial cells.

The protein resides in the golgi apparatus membrane. The protein localises to the postsynaptic density. It catalyses the reaction L-cysteinyl-[protein] + hexadecanoyl-CoA = S-hexadecanoyl-L-cysteinyl-[protein] + CoA. It carries out the reaction L-cysteinyl-[protein] + tetradecanoyl-CoA = S-tetradecanoyl-L-cysteinyl-[protein] + CoA. The catalysed reaction is L-cysteinyl-[protein] + octadecanoyl-CoA = S-octadecanoyl-L-cysteinyl-[protein] + CoA. Its function is as follows. Palmitoyltransferase that catalyzes the addition of palmitate onto various protein substrates. Has no stringent fatty acid selectivity and in addition to palmitate can also transfer onto target proteins myristate from tetradecanoyl-CoA and stearate from octadecanoyl-CoA. Palmitoylates IGF2R and SORT1, promoting their partitioning to an endosomal membrane subdomain where they can interact with the retromer cargo-selective complex. Thereby, regulates retrograde transport from endosomes to the Golgi apparatus of these lysosomal sorting receptors and plays a role in trafficking of lysosomal proteins. In the nervous system, catalyzes the palmitoylation of DLG4/PSD95 and regulates its synaptic clustering and function in synaptogenesis. Could be involved in the differentiation of dopaminergic neurons and the development of the diencephalon. Could also catalyze the palmitoylation of GAP43. Could also palmitoylate DNAJC5 and regulate its localization to the Golgi membrane. Could also palmitoylate FYN as shown in vitro. May palmitoylate CALHM3 subunit of gustatory voltage-gated ion channels and modulate channel gating and kinetics. This is Palmitoyltransferase ZDHHC15 from Rattus norvegicus (Rat).